The sequence spans 162 residues: Probable chemoreceptor glutamine deamidase CheD 2 (162 aa).

Belongs to the CheD family.

The catalysed reaction is L-glutaminyl-[protein] + H2O = L-glutamyl-[protein] + NH4(+). Probably deamidates glutamine residues to glutamate on methyl-accepting chemotaxis receptors (MCPs), playing an important role in chemotaxis. The chain is Probable chemoreceptor glutamine deamidase CheD 2 from Geobacter metallireducens (strain ATCC 53774 / DSM 7210 / GS-15).